Here is a 362-residue protein sequence, read N- to C-terminus: Probable dual-specificity RNA methyltransferase RlmN (362 aa).

Glu-91 (proton acceptor) is an active-site residue. Positions 97 to 329 constitute a Radical SAM core domain; the sequence is QHYGLSVCVT…KKNGVNCVVR (233 aa). Cys-104 and Cys-340 are joined by a disulfide. Residues Cys-111, Cys-115, and Cys-118 each coordinate [4Fe-4S] cluster. S-adenosyl-L-methionine-binding positions include 163-164, Ser-195, 218-220, and Asn-296; these read GE and SLH. The S-methylcysteine intermediate role is filled by Cys-340.

The protein belongs to the radical SAM superfamily. RlmN family. [4Fe-4S] cluster is required as a cofactor.

The protein localises to the cytoplasm. The enzyme catalyses adenosine(2503) in 23S rRNA + 2 reduced [2Fe-2S]-[ferredoxin] + 2 S-adenosyl-L-methionine = 2-methyladenosine(2503) in 23S rRNA + 5'-deoxyadenosine + L-methionine + 2 oxidized [2Fe-2S]-[ferredoxin] + S-adenosyl-L-homocysteine. The catalysed reaction is adenosine(37) in tRNA + 2 reduced [2Fe-2S]-[ferredoxin] + 2 S-adenosyl-L-methionine = 2-methyladenosine(37) in tRNA + 5'-deoxyadenosine + L-methionine + 2 oxidized [2Fe-2S]-[ferredoxin] + S-adenosyl-L-homocysteine. Functionally, specifically methylates position 2 of adenine 2503 in 23S rRNA and position 2 of adenine 37 in tRNAs. This is Probable dual-specificity RNA methyltransferase RlmN from Streptococcus gordonii (strain Challis / ATCC 35105 / BCRC 15272 / CH1 / DL1 / V288).